The chain runs to 257 residues: Alcohol dehydrogenase 1 (257 aa).

An NAD(+)-binding site is contributed by 9–33 (VFVGGLGFIAYEACKYLMNNDLASL). A substrate-binding site is contributed by S137. Y150 (proton acceptor) is an active-site residue.

Belongs to the short-chain dehydrogenases/reductases (SDR) family. As to quaternary structure, homodimer.

It carries out the reaction a primary alcohol + NAD(+) = an aldehyde + NADH + H(+). The enzyme catalyses a secondary alcohol + NAD(+) = a ketone + NADH + H(+). The polypeptide is Alcohol dehydrogenase 1 (ADH1) (Ceratitis capitata (Mediterranean fruit fly)).